The sequence spans 163 residues: Transcription elongation factor GreA (163 aa).

The stretch at 49-80 (ENAEYDAARDRQSEVERRILELERILENAEII) forms a coiled coil.

The protein belongs to the GreA/GreB family.

In terms of biological role, necessary for efficient RNA polymerase transcription elongation past template-encoded arresting sites. The arresting sites in DNA have the property of trapping a certain fraction of elongating RNA polymerases that pass through, resulting in locked ternary complexes. Cleavage of the nascent transcript by cleavage factors such as GreA or GreB allows the resumption of elongation from the new 3'terminus. GreA releases sequences of 2 to 3 nucleotides. The sequence is that of Transcription elongation factor GreA from Mycoplasmopsis agalactiae (strain NCTC 10123 / CIP 59.7 / PG2) (Mycoplasma agalactiae).